Consider the following 434-residue polypeptide: Calcium uptake protein 2, mitochondrial (434 aa).

A mitochondrion-targeting transit peptide spans M1–L22. The region spanning K172 to Q207 is the EF-hand 1 domain. Residues D185, D187, N189, M191, E193, and E196 each contribute to the Ca(2+) site. S205 carries the phosphoserine modification. An EF-hand 2; degenerate domain is found at E227–E262. The EF-hand 3; degenerate domain maps to T293–L328. The EF-hand 4 domain maps to L362–R397. 5 residues coordinate Ca(2+): D375, D377, D379, C381, and E386.

Belongs to the MICU1 family. MICU2 subfamily. As to quaternary structure, heterodimer; disulfide-linked; heterodimerizes with MICU1. Component of the uniplex complex, composed of MCU, EMRE/SMDT1, MICU1 and MICU2 in a 4:4:1:1 stoichiometry.

It is found in the mitochondrion intermembrane space. The protein localises to the mitochondrion inner membrane. Calcium sensor of the mitochondrial calcium uniporter (MCU) channel, which senses calcium level via its EF-hand domains. MICU1 and MICU2 form a disulfide-linked heterodimer that stimulates and inhibits MCU activity, depending on the concentration of calcium. At low calcium levels, MICU1 occludes the pore of the MCU channel, preventing mitochondrial calcium uptake. At higher calcium levels, calcium-binding to MICU1 and MICU2 induces a conformational change that weakens MCU-MICU1 interactions and moves the MICU1-MICU2 heterodimer away from the pore, allowing calcium permeation through the MCU channel. The polypeptide is Calcium uptake protein 2, mitochondrial (Homo sapiens (Human)).